Here is a 134-residue protein sequence, read N- to C-terminus: Ethylmalonyl-CoA/methylmalonyl-CoA epimerase (134 aa).

The VOC domain occupies arginine 4–valine 134. 3 residues coordinate Co(2+): histidine 7, histidine 79, and glutamate 130. Glutamate 130 (proton donor/acceptor) is an active-site residue.

The protein belongs to the methylmalonyl-CoA epimerase family. It depends on Co(2+) as a cofactor. Mn(2+) is required as a cofactor.

The catalysed reaction is (2R)-ethylmalonyl-CoA = (2S)-ethylmalonyl-CoA. It catalyses the reaction (R)-methylmalonyl-CoA = (S)-methylmalonyl-CoA. Its function is as follows. Promiscuous isomerase that catalyzes epimerization of both ethylmalonyl-CoA and methylmalonyl-CoA. Has thus a dual role in the ethylmalonyl-CoA pathway for acetyl-CoA assimilation required for R.sphaeroides growth on acetate as sole carbon source. The polypeptide is Ethylmalonyl-CoA/methylmalonyl-CoA epimerase (Cereibacter sphaeroides (strain ATCC 17023 / DSM 158 / JCM 6121 / CCUG 31486 / LMG 2827 / NBRC 12203 / NCIMB 8253 / ATH 2.4.1.) (Rhodobacter sphaeroides)).